A 635-amino-acid polypeptide reads, in one-letter code: Threonine--tRNA ligase (635 aa).

Positions 1–61 constitute a TGS domain; sequence MINISFPDGS…DNDCRLRILT (61 aa). Residues 242–533 form a catalytic region; that stretch reads DHRKLGKELD…LIEEYAGRFP (292 aa). 3 residues coordinate Zn(2+): C333, H384, and H510.

It belongs to the class-II aminoacyl-tRNA synthetase family. Homodimer. Requires Zn(2+) as cofactor.

Its subcellular location is the cytoplasm. It catalyses the reaction tRNA(Thr) + L-threonine + ATP = L-threonyl-tRNA(Thr) + AMP + diphosphate + H(+). Catalyzes the attachment of threonine to tRNA(Thr) in a two-step reaction: L-threonine is first activated by ATP to form Thr-AMP and then transferred to the acceptor end of tRNA(Thr). Also edits incorrectly charged L-seryl-tRNA(Thr). This Rickettsia bellii (strain RML369-C) protein is Threonine--tRNA ligase.